The sequence spans 278 residues: MGSTSTPASSTNRLQDKVAIITGGAGGIGETTAKLFVRYGAKVVIADISDDHGQKVCNNIGSPDVISFVHCDVTKDEDVRNLVDTTIAKHGKLDIMFGNVGVLSTTPYSILEAGNEDFKRVMDINVYGAFLVAKHAARVMIPAKKGSIVFTASISSFTAGEGVSHVYTATKHAVLGLTTSLCTELGQHGIRVNCVSPYVVASPLLTDVFGVDSSRVEELAHQAANLKGILLRAEDVADAVAYLAGDESKYVSGLNLVIDGGYTRTNPAFPTALKHGLA.

Residues 23-28, Asp47, Val73, and Asn99 contribute to the NAD(+) site; that span reads GGAGGI. Substrate-binding residues include Ser104 and Ser164. Tyr167 (proton donor/acceptor) is an active-site residue. NAD(+) contacts are provided by Lys171 and Val200.

It belongs to the short-chain dehydrogenases/reductases (SDR) family. In terms of assembly, homotetramer. In terms of tissue distribution, mostly expressed in stems and rhizomes, and, to a lower extent, in leaves.

It carries out the reaction (-)-secoisolariciresinol + 2 NAD(+) = (-)-matairesinol + 2 NADH + 2 H(+). It functions in the pathway aromatic compound metabolism; phenylpropanoid biosynthesis. In terms of biological role, oxidoreductase involved in lignan biosynthesis. Also involved in the biosynthesis of etoposide, a chemotherapeutic compound of the topoisomerase inhibitor family. Catalyzes the stereospecific conversion of (-)-secoisolariciresinol to (-)-matairesinol via a lactol intermediate. This Sinopodophyllum hexandrum (Himalayan may apple) protein is Secoisolariciresinol dehydrogenase.